The sequence spans 310 residues: Ribosomal RNA small subunit methyltransferase H (310 aa).

S-adenosyl-L-methionine is bound by residues Ala33–His35, Asp53, Phe79, Asp100, and Gln107.

This sequence belongs to the methyltransferase superfamily. RsmH family.

It localises to the cytoplasm. It catalyses the reaction cytidine(1402) in 16S rRNA + S-adenosyl-L-methionine = N(4)-methylcytidine(1402) in 16S rRNA + S-adenosyl-L-homocysteine + H(+). Specifically methylates the N4 position of cytidine in position 1402 (C1402) of 16S rRNA. The protein is Ribosomal RNA small subunit methyltransferase H of Clostridium tetani (strain Massachusetts / E88).